Consider the following 30-residue polypeptide: Cyclotide cycloviolacin O17 (30 aa).

Residues 1–30 (GIPCGESCVWIPCISAAIGCSCKNKVCYRN) constitute a cross-link (cyclopeptide (Gly-Asn)). 3 cysteine pairs are disulfide-bonded: Cys4–Cys20, Cys8–Cys22, and Cys13–Cys27.

Post-translationally, this is a cyclic peptide.

In terms of biological role, probably participates in a plant defense mechanism. This Psychotria brachyceras protein is Cyclotide cycloviolacin O17.